We begin with the raw amino-acid sequence, 204 residues long: MASMALRRLASRNLVSGGIFRPLSVSRSFNTNAQMGRVDHDHELDDRSNRAPISRRGDFPASFFSDVFDPFRATRSVGQLMNLMDQLMENPFMAASRGSGRAMRRGWDVREDEEALELKVDMPGLAKEDVKVSVEDNTLIIKSEAEKETEEEEQRRRYSSRIELTPNLYKIDGIKAEMKNGVLKVTVPKIKEEEKKDVFQVMVD.

The interval 34-55 (QMGRVDHDHELDDRSNRAPISR) is disordered. Over residues 37–49 (RVDHDHELDDRSN) the composition is skewed to basic and acidic residues. A sHSP domain is found at 98-204 (GSGRAMRRGW…KKDVFQVMVD (107 aa)).

This sequence belongs to the small heat shock protein (HSP20) family.

The protein localises to the plastid. It is found in the chloroplast stroma. The chain is Small heat shock protein, chloroplastic (HSP23) from Oxybasis rubra (Red goosefoot).